The sequence spans 608 residues: Serine/threonine-protein kinase SSN3 (608 aa).

Positions 1–72 are disordered; sequence MSYSSASFRK…PGTVGTRTSI (72 aa). Low complexity predominate over residues 17–47; it reads SQPSQTTTTTTSANQPQSQSQQQPLQQSQQQ. Residues 49–59 show a composition bias toward basic residues; the sequence is LHMKPNPHIPH. A Protein kinase domain is found at 104–492; the sequence is YQIMGYIAAG…ADQALLHPYF (389 aa). Residues 110–118 and lysine 182 contribute to the ATP site; that span reads IAAGTYGKV. The active-site Proton acceptor is aspartate 307. Residues 523-608 are disordered; it reads MTTAANNNNN…LPGGIRKKRG (86 aa). Positions 528-583 are enriched in low complexity; the sequence is NNNNNNNNNNNNNNNNNNNNNNNNNNNSGHQLSQQQNVQIQQVHQMQQQIHSQQLQ.

This sequence belongs to the protein kinase superfamily. CMGC Ser/Thr protein kinase family. CDC2/CDKX subfamily. In terms of assembly, component of the SRB8-11 complex, a regulatory module of the Mediator complex. Mg(2+) is required as a cofactor.

The protein resides in the nucleus. It catalyses the reaction L-seryl-[protein] + ATP = O-phospho-L-seryl-[protein] + ADP + H(+). It carries out the reaction L-threonyl-[protein] + ATP = O-phospho-L-threonyl-[protein] + ADP + H(+). The catalysed reaction is [DNA-directed RNA polymerase] + ATP = phospho-[DNA-directed RNA polymerase] + ADP + H(+). Its function is as follows. Component of the SRB8-11 complex. The SRB8-11 complex is a regulatory module of the Mediator complex which is itself involved in regulation of basal and activated RNA polymerase II-dependent transcription. The SRB8-11 complex may be involved in the transcriptional repression of a subset of genes regulated by Mediator. It may inhibit the association of the Mediator complex with RNA polymerase II to form the holoenzyme complex. The SRB8-11 complex phosphorylates the C-terminal domain (CTD) of the largest subunit of RNA polymerase II. This chain is Serine/threonine-protein kinase SSN3 (SSN3), found in Candida albicans (strain SC5314 / ATCC MYA-2876) (Yeast).